A 126-amino-acid chain; its full sequence is Large ribosomal subunit protein eL8 (126 aa).

It belongs to the eukaryotic ribosomal protein eL8 family. As to quaternary structure, part of the 50S ribosomal subunit. Probably part of the RNase P complex.

The protein resides in the cytoplasm. Its function is as follows. Multifunctional RNA-binding protein that recognizes the K-turn motif in ribosomal RNA, the RNA component of RNase P, box H/ACA, box C/D and box C'/D' sRNAs. This chain is Large ribosomal subunit protein eL8, found in Sulfolobus acidocaldarius (strain ATCC 33909 / DSM 639 / JCM 8929 / NBRC 15157 / NCIMB 11770).